Consider the following 653-residue polypeptide: 4-hydroxy-2,2'-bipyrrole-5-methanol synthase PigH (653 aa).

The 78-residue stretch at 7 to 84 folds into the Carrier domain; that stretch reads ETYETLKQSV…DALDGILQRE (78 aa). S45 carries the post-translational modification O-(pantetheine 4'-phosphoryl)serine. Pyridoxal 5'-phosphate is bound at residue 354-355; the sequence is GY. H379 contacts substrate. 3 residues coordinate pyridoxal 5'-phosphate: S426, H454, and T482. The residue at position 485 (K485) is an N6-(pyridoxal phosphate)lysine. A helical transmembrane segment spans residues 512-532; sequence VFAATIPAPVAAGVIASIDVM.

Pyridoxal 5'-phosphate is required as a cofactor.

It localises to the membrane. It functions in the pathway antibiotic biosynthesis; prodigiosin biosynthesis. Involved in the biosynthesis of 4-methoxy-2,2'-bipyrrole-5-carbaldehyde (MBC), one of the terminal products involved in the biosynthesis of the red antibiotic prodigiosin (Pig). Carrier of the L-malonyl group (malonyl-S-PigH), which is decarboxylated by PigJ to yield a C2 carbanion acetyl-S-PigH. Then the pyrrolyl group of pyrrolyl-S-cysteinyl PigJ intermediate is captured by the C2 carbanion acetyl-S-PigH to yield the pyrrolyl-beta-ketoacyl-S-PigH. In the last step, PigH catalyzes the decarboxylative condensation between the pyrrolyl-beta-ketoacyl (pyrrolyl-beta-ketoacyl-S-PigH) and L-serine to yield 4-hydroxy-2,2'-bipyrrole-5-methanol (HBM). In Serratia sp. (strain ATCC 39006) (Prodigiosinella confusarubida), this protein is 4-hydroxy-2,2'-bipyrrole-5-methanol synthase PigH.